The chain runs to 199 residues: Photosystem I reaction center subunit XI (199 aa).

2 helical membrane-spanning segments follow: residues 108-128 (LTAGLLAAIGAVHILTALLVL) and 165-185 (FWLGGCGGSVFAWLLVGTLHL).

This sequence belongs to the PsaL family.

The protein resides in the cellular thylakoid membrane. In Prochlorococcus marinus (strain AS9601), this protein is Photosystem I reaction center subunit XI.